The chain runs to 455 residues: Exodeoxyribonuclease 7 large subunit (455 aa).

It belongs to the XseA family. As to quaternary structure, heterooligomer composed of large and small subunits.

It is found in the cytoplasm. It carries out the reaction Exonucleolytic cleavage in either 5'- to 3'- or 3'- to 5'-direction to yield nucleoside 5'-phosphates.. Functionally, bidirectionally degrades single-stranded DNA into large acid-insoluble oligonucleotides, which are then degraded further into small acid-soluble oligonucleotides. This Lactobacillus acidophilus (strain ATCC 700396 / NCK56 / N2 / NCFM) protein is Exodeoxyribonuclease 7 large subunit.